A 457-amino-acid chain; its full sequence is MERAMERQKILLRHLNPVSSSNSSLKHEPSLLSPVNCVSEVSPMAAFGDDIVIVAAYRTAICKARRGGFKDTLPDDLLASVLKAVVERTSLDPSEVGDIVVGTVIAPGSQRAMECRVAAYFAGFPDSVPVRTVNRQCSSGLQAVADVAASIRAGYYDIGIGAGVESMSTDHIPGGGFHGSNPRAQDFPKARDCLLPMGITSENVAERFGVTREEQDMAAVESHKRAAAAIASGKLKDEIIPVATKIVDPETKAEKAIVVSVDDGVRPNSNMADLAKLKTVFKQNGSTTAGNASQISDGAGAVLLMKRSLAMKKGLPILGVFRSFAVTGVEPSVMGIGPAVAIPAATKLAGLNVSDIDLFEINEAFASQYVYSCKKLELDMEKVNVNGGAIAIGHPLGATGARCVATLLHEMKRRGKDCRFGVISMCIGTGMGAAAVFERGDSVDNLSNARVANGDSH.

A peroxisome-targeting transit peptide spans 1–37 (MERAMERQKILLRHLNPVSSSNSSLKHEPSLLSPVNC). The Acyl-thioester intermediate role is filled by Cys137. Active-site proton acceptor residues include His394 and Cys426.

It belongs to the thiolase-like superfamily. Thiolase family. Homodimer. In terms of tissue distribution, expressed in seedlings and wounded leaves.

Its subcellular location is the peroxisome. It catalyses the reaction an acyl-CoA + acetyl-CoA = a 3-oxoacyl-CoA + CoA. Its pathway is lipid metabolism; fatty acid metabolism. Probably involved in long chain fatty-acid beta-oxidation prior to gluconeogenesis during germination and subsequent seedling growth. Involved in systemic jasmonic acid (JA) biosynthesis after wounding and may be during senescence. This chain is 3-ketoacyl-CoA thiolase 5, peroxisomal (KAT5), found in Arabidopsis thaliana (Mouse-ear cress).